We begin with the raw amino-acid sequence, 185 residues long: Peptide deformylase (185 aa).

Fe cation is bound by residues C109 and H152. E153 is an active-site residue. H156 provides a ligand contact to Fe cation.

The protein belongs to the polypeptide deformylase family. The cofactor is Fe(2+).

The enzyme catalyses N-terminal N-formyl-L-methionyl-[peptide] + H2O = N-terminal L-methionyl-[peptide] + formate. Its function is as follows. Removes the formyl group from the N-terminal Met of newly synthesized proteins. Requires at least a dipeptide for an efficient rate of reaction. N-terminal L-methionine is a prerequisite for activity but the enzyme has broad specificity at other positions. The protein is Peptide deformylase of Roseiflexus castenholzii (strain DSM 13941 / HLO8).